Consider the following 623-residue polypeptide: DNA-directed RNA polymerase subunit beta' (623 aa).

4 residues coordinate Zn(2+): Cys70, Cys72, Cys85, and Cys88. Asp466, Asp468, and Asp470 together coordinate Mg(2+).

This sequence belongs to the RNA polymerase beta' chain family. RpoC1 subfamily. In terms of assembly, in plastids the minimal PEP RNA polymerase catalytic core is composed of four subunits: alpha, beta, beta', and beta''. When a (nuclear-encoded) sigma factor is associated with the core the holoenzyme is formed, which can initiate transcription. The cofactor is Mg(2+). It depends on Zn(2+) as a cofactor.

It localises to the plastid. The protein localises to the chloroplast. The enzyme catalyses RNA(n) + a ribonucleoside 5'-triphosphate = RNA(n+1) + diphosphate. DNA-dependent RNA polymerase catalyzes the transcription of DNA into RNA using the four ribonucleoside triphosphates as substrates. The chain is DNA-directed RNA polymerase subunit beta' from Guillardia theta (Cryptophyte).